The primary structure comprises 274 residues: Acetyl-coenzyme A carboxylase carboxyl transferase subunit alpha (274 aa).

The 249-residue stretch at 2-250 (NKEFIKSIVV…KKEIMNAMNE (249 aa)) folds into the CoA carboxyltransferase C-terminal domain.

The protein belongs to the AccA family. Acetyl-CoA carboxylase is a heterohexamer composed of biotin carboxyl carrier protein (AccB), biotin carboxylase (AccC) and two subunits each of ACCase subunit alpha (AccA) and ACCase subunit beta (AccD).

Its subcellular location is the cytoplasm. It carries out the reaction N(6)-carboxybiotinyl-L-lysyl-[protein] + acetyl-CoA = N(6)-biotinyl-L-lysyl-[protein] + malonyl-CoA. It functions in the pathway lipid metabolism; malonyl-CoA biosynthesis; malonyl-CoA from acetyl-CoA: step 1/1. Functionally, component of the acetyl coenzyme A carboxylase (ACC) complex. First, biotin carboxylase catalyzes the carboxylation of biotin on its carrier protein (BCCP) and then the CO(2) group is transferred by the carboxyltransferase to acetyl-CoA to form malonyl-CoA. The sequence is that of Acetyl-coenzyme A carboxylase carboxyl transferase subunit alpha from Clostridium botulinum (strain Alaska E43 / Type E3).